The primary structure comprises 88 residues: Small ribosomal subunit protein uS19 (88 aa).

It belongs to the universal ribosomal protein uS19 family.

In terms of biological role, protein S19 forms a complex with S13 that binds strongly to the 16S ribosomal RNA. This Carsonella ruddii (strain PV) protein is Small ribosomal subunit protein uS19.